The following is a 249-amino-acid chain: Ribonuclease PH (249 aa).

Phosphate is bound by residues Arg-86 and 124–126; that span reads GTR.

The protein belongs to the RNase PH family. Homohexameric ring arranged as a trimer of dimers.

The enzyme catalyses tRNA(n+1) + phosphate = tRNA(n) + a ribonucleoside 5'-diphosphate. In terms of biological role, phosphorolytic 3'-5' exoribonuclease that plays an important role in tRNA 3'-end maturation. Removes nucleotide residues following the 3'-CCA terminus of tRNAs; can also add nucleotides to the ends of RNA molecules by using nucleoside diphosphates as substrates, but this may not be physiologically important. Probably plays a role in initiation of 16S rRNA degradation (leading to ribosome degradation) during starvation. The polypeptide is Ribonuclease PH (Clostridium botulinum (strain Eklund 17B / Type B)).